Consider the following 574-residue polypeptide: ESX-1 secretion system protein EccA1 (574 aa).

Residue Gly335 to Thr342 participates in ATP binding.

The protein belongs to the CbxX/CfxQ family. Part of the ESX-1 / type VII secretion system (T7SS), which is composed of cytosolic and membrane components.

The protein resides in the cytoplasm. In terms of biological role, part of the ESX-1 / type VII specialized secretion system (T7SS), which exports several proteins including EsxA and EsxB. Plays a role in DNA conjugation, in both donor and recipient strains. EccA1 exhibits ATPase activity and may provide energy for the export of ESX-1 substrates. The protein is ESX-1 secretion system protein EccA1 of Mycolicibacterium smegmatis (strain ATCC 700084 / mc(2)155) (Mycobacterium smegmatis).